The chain runs to 195 residues: MKIWTSEHVFDHPWEMVTTAAMQKYPNPMNPSVVGVDVLDRHVDPSGKLHSHRLLSTEWGLPSIVKSLIGAARTKTYVQEHSVVDPVKKTMELKSTNISFTNMVSVDERLTYKPHPQDPEKTVLTQEAIITVKGVSLSSYLEGLMASTISSNANKGREAMEWVIHKLNAEIEDLAASARGSIRTPMAAAAALVEK.

Residues 1-172 (MKIWTSEHVF…VIHKLNAEIE (172 aa)) enclose the PRELI/MSF1 domain. Ser46 and Ser51 each carry phosphoserine.

The protein belongs to the slowmo family.

The sequence is that of PRELI domain containing protein 3B (PRELID3B) from Cricetulus griseus (Chinese hamster).